The chain runs to 720 residues: Denticleless protein homolog (720 aa).

3 WD repeats span residues 43-85 (GMPV…TTKL), 92-131 (AHSNAVFDLAWVPGEHRIVTASGDQTAKVWDVRAGELLGI), and 134-174 (GHQC…KDGF). The short motif at 164-167 (WDTR) is the DDB1-binding motif element. The Nuclear localization signal motif lies at 193 to 200 (PSKLRKKR). WD repeat units follow at residues 211-250 (DFQQSVTVVLLQDEHTLISAGAVDGVIKVWDLRKNYAAYR), 266-305 (TRKLGYSSLVLDSTGANLFANCTDDSIYMFNMTSLKTFPV), 310-351 (GHQN…LPPR), and 355-395 (GHSQ…EEEK). The short motif at 240–243 (WDLR) is the DDB1-binding motif element. Disordered stretches follow at residues 411–437 (KPEEQRGAGRSASPQSTPAKAFSVGSP), 476–495 (PAKLSGASPRTSPKLVPSSK), 528–552 (QSLLETSSTPKAQHSQAEKRAKRRL), and 607–698 (NEHE…TSPK). The span at 528–542 (QSLLETSSTPKAQHS) shows a compositional bias: polar residues. Composition is skewed to basic and acidic residues over residues 543 to 552 (QAEKRAKRRL) and 642 to 660 (CERDSDVVDKENSSPERKN).

The protein belongs to the WD repeat cdt2 family. Component of the DCX(DTL) E3 ubiquitin ligase complex, at least composed of CUL4 (CUL4A or CUL4B), DDB1, DTL/CDT2 and RBX1.

Its subcellular location is the nucleus. The protein resides in the cytoplasm. It localises to the cytoskeleton. It is found in the microtubule organizing center. The protein localises to the centrosome. Its subcellular location is the chromosome. It functions in the pathway protein modification; protein ubiquitination. Its function is as follows. Substrate-specific adapter of a DCX (DDB1-CUL4-X-box) E3 ubiquitin-protein ligase complex required for cell cycle control, DNA damage response and translesion DNA synthesis. The DCX(DTL) complex, also named CRL4(CDT2) complex, mediates the polyubiquitination and subsequent degradation of CDT1, CDKN1A/p21(CIP1), KMT5A and SDE2. CDT1 degradation in response to DNA damage is necessary to ensure proper cell cycle regulation of DNA replication. CDKN1A/p21(CIP1) degradation during S phase or following UV irradiation is essential to control replication licensing. KMT5A degradation is also important for a proper regulation of mechanisms such as TGF-beta signaling, cell cycle progression, DNA repair and cell migration. Most substrates require their interaction with PCNA for their polyubiquitination: substrates interact with PCNA via their PIP-box, and those containing the 'K+4' motif in the PIP box, recruit the DCX(DTL) complex, leading to their degradation. In undamaged proliferating cells, the DCX(DTL) complex also promotes the 'Lys-164' monoubiquitination of PCNA, thereby being involved in PCNA-dependent translesion DNA synthesis. May play a role in the regulation of the circadian clock. The protein is Denticleless protein homolog (DTL) of Gallus gallus (Chicken).